A 180-amino-acid polypeptide reads, in one-letter code: MARVTVEDCIDKVESPYELVLVAKERAVQLNSGLEPTLDRDNDKNTVISLREIAADTIKVSDLTDSAIHKLRKHVEQVDDGTDDDEIIGDDFESMYKGEISKSGTPILPSKRARKIPEKIQVSSDDLEELTAKAEPEVDVDAELEVGDEETAVSLDQIAEAETEAETTEVNSDDSETTNS.

Residues 100-180 form a disordered region; the sequence is ISKSGTPILP…NSDDSETTNS (81 aa). Composition is skewed to acidic residues over residues 137–151 and 159–180; these read EVDV…DEET and AEAE…TTNS.

It belongs to the RNA polymerase subunit omega family. As to quaternary structure, the RNAP catalytic core consists of 2 alpha, 1 beta, 1 beta' and 1 omega subunit. When a sigma factor is associated with the core the holoenzyme is formed, which can initiate transcription.

It catalyses the reaction RNA(n) + a ribonucleoside 5'-triphosphate = RNA(n+1) + diphosphate. Promotes RNA polymerase assembly. Latches the N- and C-terminal regions of the beta' subunit thereby facilitating its interaction with the beta and alpha subunits. This Pelagibacter ubique (strain HTCC1062) protein is DNA-directed RNA polymerase subunit omega.